A 504-amino-acid chain; its full sequence is Ribose import ATP-binding protein RbsA (504 aa).

2 consecutive ABC transporter domains span residues 6–242 and 252–495; these read LELK…VGRR and VRHG…VGKT. 38–45 serves as a coordination point for ATP; sequence GENGAGKS.

Belongs to the ABC transporter superfamily. Ribose importer (TC 3.A.1.2.1) family. In terms of assembly, the complex is composed of an ATP-binding protein (RbsA), two transmembrane proteins (RbsC) and a solute-binding protein (RbsB).

The protein resides in the cell inner membrane. It carries out the reaction D-ribose(out) + ATP + H2O = D-ribose(in) + ADP + phosphate + H(+). Functionally, part of the ABC transporter complex RbsABC involved in ribose import. Responsible for energy coupling to the transport system. The protein is Ribose import ATP-binding protein RbsA of Photobacterium profundum (strain SS9).